Consider the following 554-residue polypeptide: Methyl-coenzyme M reductase II subunit alpha (554 aa).

Position 151 (Q151) interacts with coenzyme F430. Residues R229, 260–261 (KH), and R274 each bind coenzyme B. The coenzyme M site is built by Y336 and Y447.

It belongs to the methyl-coenzyme M reductase alpha subunit family. MCR is a hexamer of two alpha, two beta, and two gamma chains, forming a dimer of heterotrimers. It depends on coenzyme F430 as a cofactor.

The enzyme catalyses coenzyme B + methyl-coenzyme M = methane + coenzyme M-coenzyme B heterodisulfide. It functions in the pathway one-carbon metabolism; methyl-coenzyme M reduction; methane from methyl-coenzyme M: step 1/1. In terms of biological role, component of the methyl-coenzyme M reductase (MCR) I that catalyzes the reductive cleavage of methyl-coenzyme M (CoM-S-CH3 or 2-(methylthio)ethanesulfonate) using coenzyme B (CoB or 7-mercaptoheptanoylthreonine phosphate) as reductant which results in the production of methane and the mixed heterodisulfide of CoB and CoM (CoM-S-S-CoB). This is the final step in methanogenesis. In Methanothermus fervidus (strain ATCC 43054 / DSM 2088 / JCM 10308 / V24 S), this protein is Methyl-coenzyme M reductase II subunit alpha (mrtA).